A 542-amino-acid polypeptide reads, in one-letter code: CTP synthase (542 aa).

The tract at residues 1–265 (MARYVFITGG…DSEVLSAFGI (265 aa)) is amidoligase domain. Serine 13 provides a ligand contact to CTP. Serine 13 contributes to the UTP binding site. Residue 14-19 (SLGKGI) participates in ATP binding. Tyrosine 54 contributes to the L-glutamine binding site. Aspartate 71 lines the ATP pocket. The Mg(2+) site is built by aspartate 71 and glutamate 139. Residues 146-148 (DIE), 186-191 (KTKPTQ), and lysine 222 contribute to the CTP site. UTP contacts are provided by residues 186–191 (KTKPTQ) and lysine 222. A Glutamine amidotransferase type-1 domain is found at 291 to 541 (TIAIVGKYTG…IEAAIEQSRL (251 aa)). Glycine 353 contributes to the L-glutamine binding site. Residue cysteine 380 is the Nucleophile; for glutamine hydrolysis of the active site. L-glutamine is bound by residues 381–384 (FGMQ), glutamate 404, and arginine 469. Catalysis depends on residues histidine 514 and glutamate 516.

Belongs to the CTP synthase family. As to quaternary structure, homotetramer.

It carries out the reaction UTP + L-glutamine + ATP + H2O = CTP + L-glutamate + ADP + phosphate + 2 H(+). It catalyses the reaction L-glutamine + H2O = L-glutamate + NH4(+). The catalysed reaction is UTP + NH4(+) + ATP = CTP + ADP + phosphate + 2 H(+). It participates in pyrimidine metabolism; CTP biosynthesis via de novo pathway; CTP from UDP: step 2/2. With respect to regulation, allosterically activated by GTP, when glutamine is the substrate; GTP has no effect on the reaction when ammonia is the substrate. The allosteric effector GTP functions by stabilizing the protein conformation that binds the tetrahedral intermediate(s) formed during glutamine hydrolysis. Inhibited by the product CTP, via allosteric rather than competitive inhibition. Its function is as follows. Catalyzes the ATP-dependent amination of UTP to CTP with either L-glutamine or ammonia as the source of nitrogen. Regulates intracellular CTP levels through interactions with the four ribonucleotide triphosphates. This Brucella anthropi (strain ATCC 49188 / DSM 6882 / CCUG 24695 / JCM 21032 / LMG 3331 / NBRC 15819 / NCTC 12168 / Alc 37) (Ochrobactrum anthropi) protein is CTP synthase.